The following is a 297-amino-acid chain: uncharacterized protein (297 aa).

The N-terminal stretch at 1 to 24 (MRAINKFLITVCIALLASVAVALG) is a signal peptide. The heme site is built by Cys58, Cys61, His62, Cys141, Cys144, His145, Cys167, Cys170, His171, Cys223, Cys226, His227, Cys264, Cys267, and His268. The segment at 277–297 (TNSVDTWSREGEGAEVQQLPH) is disordered.

Post-translationally, binds 5 heme groups per subunit.

This is an uncharacterized protein from Archaeoglobus fulgidus (strain ATCC 49558 / DSM 4304 / JCM 9628 / NBRC 100126 / VC-16).